The chain runs to 270 residues: tRNA pseudouridine synthase A (270 aa).

Asp51 acts as the Nucleophile in catalysis. Tyr109 contributes to the substrate binding site.

Belongs to the tRNA pseudouridine synthase TruA family. As to quaternary structure, homodimer.

The catalysed reaction is uridine(38/39/40) in tRNA = pseudouridine(38/39/40) in tRNA. Formation of pseudouridine at positions 38, 39 and 40 in the anticodon stem and loop of transfer RNAs. This Burkholderia thailandensis (strain ATCC 700388 / DSM 13276 / CCUG 48851 / CIP 106301 / E264) protein is tRNA pseudouridine synthase A.